A 501-amino-acid chain; its full sequence is Cytochrome P450 monooxygenase 76AD131 (501 aa).

A helical transmembrane segment spans residues 1–21 (MGYYAIFAVVLPFLWTCFYLL). Asparagine 115 and asparagine 264 each carry an N-linked (GlcNAc...) asparagine glycan. Residue cysteine 444 coordinates heme.

It belongs to the cytochrome P450 family. It depends on heme as a cofactor. Highly expressed in aerial parts, in both skin and flesh tissues.

It localises to the membrane. It catalyses the reaction tyramine + reduced [NADPH--hemoprotein reductase] + O2 = dopamine + oxidized [NADPH--hemoprotein reductase] + H2O + H(+). The enzyme catalyses 3-methoxytyramine + reduced [NADPH--hemoprotein reductase] + O2 = 3,4-dihydroxy-5-methoxyphenethylamine + oxidized [NADPH--hemoprotein reductase] + H2O + H(+). Its pathway is aromatic compound metabolism. It functions in the pathway alkaloid biosynthesis. In terms of biological role, cytochrome P450 monooxygenase participating in the biosynthesis of natural products derived from phenylethylamine, including mescaline, a natural hallucinogen potentially used in psychotherapeutic treatments. Catalyzes the hydroxylation of tyramine to dopamine and of 3-methoxytyramine to 3,4-dihydroxy-5-methoxyphenethylamine. The chain is Cytochrome P450 monooxygenase 76AD131 from Lophophora williamsii (Peyote).